The following is a 523-amino-acid chain: Mogroside I-A1 synthase (523 aa).

Catalysis depends on His-39, which acts as the Proton acceptor. Asp-136 (charge relay) is an active-site residue. Residues Ser-311, Gln-374, Trp-392, Asn-393, Ser-394, Glu-397, Asp-413, and Gln-414 each coordinate UDP-alpha-D-glucose.

It belongs to the UDP-glycosyltransferase family. As to expression, highly expressed in young fruits 15 and 34 days after anthesis (15-DAA and 34-DAA).

The catalysed reaction is mogrol + UDP-alpha-D-glucose = mogroside I-A1 + UDP + H(+). The enzyme catalyses mogroside I-A1 + UDP-alpha-D-glucose = mogroside IIE + UDP + H(+). It catalyses the reaction mogroside IE + UDP-alpha-D-glucose = mogroside IIE + UDP + H(+). It carries out the reaction mogroside II-A1 + UDP-alpha-D-glucose = mogroside IIIX + UDP + H(+). The catalysed reaction is mogroside II-A + UDP-alpha-D-glucose = mogroside III + UDP + H(+). The enzyme catalyses mogroside IIE + UDP-alpha-D-glucose = mogroside III-C3(1-&gt;6) + UDP + H(+). It catalyses the reaction mogroside III + UDP-alpha-D-glucose = isomogroside IV + UDP + H(+). It carries out the reaction mogroside III + UDP-alpha-D-glucose = mogroside IV + UDP + H(+). The catalysed reaction is mogroside IIIX + UDP-alpha-D-glucose = mogroside IVA + UDP + H(+). The enzyme catalyses siamenoside I + UDP-alpha-D-glucose = isomogroside V + UDP + H(+). Its pathway is secondary metabolite biosynthesis; terpenoid biosynthesis. UDP-glycosyltransferase involved in the biosynthesis of cucurbitacin and mogroside tetracyclic triterpene natural products (e.g. siamenoside I and mogrosides IV, V and VI). Cucurbitacins have cytotoxic properties and exhibit deterrent taste as a defense barrier against herbivores. Mogrosides are nonsugar highly oxygenated compounds used as high-intensity zero-calorie sweeteners; they also possess pharmacological properties such as regulating immunity, lowering blood sugar and lipid levels, protecting the liver, and acting as antioxidants and antitumor agents. Catalyzes the C24 primary glucosylation of mogrol and mogroside I-E1, and the C3 primary glucosylation of mogroside I-A1, mogroside II-A1 and mogroside II-A. Also supports branching glucosylations of mogroside II-E, mogroside III, mogroside IIIx and siamenoside I. The sequence is that of Mogroside I-A1 synthase from Siraitia grosvenorii (Monk's fruit).